The primary structure comprises 540 residues: Type II methyltransferase M.AccI (540 aa).

It belongs to the N(4)/N(6)-methyltransferase family. Monomer.

The catalysed reaction is a 2'-deoxyadenosine in DNA + S-adenosyl-L-methionine = an N(6)-methyl-2'-deoxyadenosine in DNA + S-adenosyl-L-homocysteine + H(+). Functionally, a gamma subtype methylase, recognizes the double-stranded sequence 5'-GTMKAC-3', methylates A-5 on both strands, and protects the DNA from cleavage by the AccI endonuclease. The chain is Type II methyltransferase M.AccI (accIM) from Acinetobacter calcoaceticus.